Consider the following 682-residue polypeptide: Polycomb protein suz12-B (682 aa).

The tract at residues 326–355 (DPSDPSTAPVAKPLSTRNSDTSTTESRIST) is disordered. Over residues 340-354 (STRNSDTSTTESRIS) the composition is skewed to polar residues. A C2H2-type zinc finger spans residues 408–431 (LHCPWCTLNCRKLYSLLKHLKLSH). The segment at 523 to 599 (RLYFHSDSCM…NQMSQASMLF (77 aa)) is VEFS-box.

Belongs to the VEFS (VRN2-EMF2-FIS2-SU(Z)12) family. Component of the prc2/eed-ezh2 complex.

It is found in the nucleus. Polycomb group (PcG) protein. Component of the prc2/eed-ezh2 complex, which methylates 'Lys-9' and 'Lys-27' of histone H3, leading to transcriptional repression of the affected target gene. This is Polycomb protein suz12-B (suz12b) from Danio rerio (Zebrafish).